Here is a 260-residue protein sequence, read N- to C-terminus: 14-3-3 protein 4 (260 aa).

Residues 238-260 (DNADDVGDDIKEASKPESGEGQQ) form a disordered region. Basic and acidic residues predominate over residues 245–260 (DDIKEASKPESGEGQQ).

Belongs to the 14-3-3 family. In terms of assembly, homodimer.

In Solanum lycopersicum (Tomato), this protein is 14-3-3 protein 4 (TFT4).